Here is a 332-residue protein sequence, read N- to C-terminus: Phospholipase A2 inhibitor beta (332 aa).

The N-terminal stretch at 1–23 (MKSSVPSLLFVSLVMSLNSYTQQ) is a signal peptide. The N-linked (GlcNAc...) asparagine glycan is linked to Asn35. LRR repeat units follow at residues 78-101 (LPNLQELHLSNNRLKTLPSGLFRN), 103-125 (PELHTLDLSTNLLEDLPPEIFTS), 127-149 (TSLTLLSISENRLAKLRLSWFET), 150-173 (LKELRILSLDNNQLKEVPISCFDK), 175-197 (EKLTFLDLSSNHLHRLSPDMFSG), 198-221 (LDNLERLSLENNPIRCIAPKSFHG), 223-245 (PKLSIISLKNCSLTNIITGVFQP), and 247-269 (NHXVLLDLSDNELTMLDPPVAIP). The N-linked (GlcNAc...) asparagine glycan is linked to Asn232. N-linked (GlcNAc...) asparagine glycosylation occurs at Asn272. Residues 280–331 (NPWACNCRMDNLLTWVKEHKIDLYSKQEIVCAFPKSFKGEEATSLHRSQICP) enclose the LRRCT domain.

This sequence belongs to the beta-type phospholipase A2 inhibitor family. In terms of assembly, homotrimer.

It localises to the secreted. Inhibits the enzymatic activity of the basic phospholipase A2 (PLA2). This is Phospholipase A2 inhibitor beta from Elaphe climacophora (Japanese rat snake).